Reading from the N-terminus, the 389-residue chain is Cellobiose 2-epimerase (389 aa).

This sequence belongs to the cellobiose 2-epimerase family.

The enzyme catalyses D-cellobiose = beta-D-glucosyl-(1-&gt;4)-D-mannopyranose. Its function is as follows. Catalyzes the reversible epimerization of cellobiose to 4-O-beta-D-glucopyranosyl-D-mannose (Glc-Man). This is Cellobiose 2-epimerase from Ruminococcus albus (strain ATCC 27210 / DSM 20455 / JCM 14654 / NCDO 2250 / 7).